The following is a 200-amino-acid chain: GTP-dependent dephospho-CoA kinase (200 aa).

D56, V57, V58, D75, and E132 together coordinate GTP.

The protein belongs to the GTP-dependent DPCK family.

The enzyme catalyses 3'-dephospho-CoA + GTP = GDP + CoA + H(+). It participates in cofactor biosynthesis; coenzyme A biosynthesis. Functionally, catalyzes the GTP-dependent phosphorylation of the 3'-hydroxyl group of dephosphocoenzyme A to form coenzyme A (CoA). This is GTP-dependent dephospho-CoA kinase from Caldivirga maquilingensis (strain ATCC 700844 / DSM 13496 / JCM 10307 / IC-167).